The following is a 202-amino-acid chain: NNYCKIKCRSGIHTLCKYGTSTKPNCGRSVVKASGLTKAEKLEILKQHNEFRQKVARGLETRGNPGPQPPAKSMNTLVWNDELAQIAQVWASQCKYGHDNCRNTAKYLVGQNIAEQSTTAASFEPVSNMVKMWSDEVKDYQYGSSKNKLNDVGHYTQMVWAKTKEIGCGNIKYIENGWHHHYLVCNYGPAGNIGNEPIYEKK.

Intrachain disulfides connect Cys4/Cys16, Cys8/Cys101, and Cys26/Cys94. Position 107 is a phosphotyrosine (Tyr107). N-linked (Glc) (glycation) lysine glycosylation occurs at Lys138. Cys168 and Cys185 are oxidised to a cystine.

This sequence belongs to the CRISP family. In terms of tissue distribution, expressed by the venom gland.

The protein resides in the secreted. Its function is as follows. Does not show toxicity when intravenously injected into mice tail. In Vespa velutina (Asian yellow-legged hornet), this protein is Venom allergen 5.